The primary structure comprises 590 residues: Acetolactate synthase large subunit (590 aa).

A thiamine diphosphate-binding site is contributed by glutamate 61. FAD-binding positions include arginine 163, 271-292, and 314-333; these read HGTAYANFAVSECDLLIALGAR and DIDPAEVGKNRIPQVAIVGD. Residues 405 to 484 form a thiamine pyrophosphate binding region; sequence QHQMWSAQFL…IKIVIINNRW (80 aa). The Mg(2+) site is built by aspartate 455 and asparagine 482.

Belongs to the TPP enzyme family. As to quaternary structure, dimer of large and small chains. Mg(2+) serves as cofactor. Requires thiamine diphosphate as cofactor.

It localises to the plastid. Its subcellular location is the chloroplast. The catalysed reaction is 2 pyruvate + H(+) = (2S)-2-acetolactate + CO2. Its pathway is amino-acid biosynthesis; L-isoleucine biosynthesis; L-isoleucine from 2-oxobutanoate: step 1/4. It functions in the pathway amino-acid biosynthesis; L-valine biosynthesis; L-valine from pyruvate: step 1/4. This Porphyra purpurea (Red seaweed) protein is Acetolactate synthase large subunit (ilvB).